Reading from the N-terminus, the 288-residue chain is 2-methoxy-6-polyprenyl-1,4-benzoquinol methylase, mitochondrial (288 aa).

Residues 1-27 (MALRSVSRRLGSRILNQRSFVASLHSH) constitute a mitochondrion transit peptide. S-adenosyl-L-methionine contacts are provided by residues threonine 94, aspartate 130, and 160 to 161 (DA).

This sequence belongs to the class I-like SAM-binding methyltransferase superfamily. MenG/UbiE family. As to quaternary structure, component of a multi-subunit COQ enzyme complex.

It is found in the mitochondrion inner membrane. The catalysed reaction is a 2-methoxy-6-(all-trans-polyprenyl)benzene-1,4-diol + S-adenosyl-L-methionine = a 5-methoxy-2-methyl-3-(all-trans-polyprenyl)benzene-1,4-diol + S-adenosyl-L-homocysteine + H(+). The protein operates within cofactor biosynthesis; ubiquinone biosynthesis. Functionally, methyltransferase required for the conversion of 2-polyprenyl-6-methoxy-1,4-benzoquinol (DDMQH2) to 2-polyprenyl-3-methyl-6-methoxy-1,4-benzoquinol (DMQH2). The chain is 2-methoxy-6-polyprenyl-1,4-benzoquinol methylase, mitochondrial from Arabidopsis thaliana (Mouse-ear cress).